The sequence spans 141 residues: Hemoglobin subunit alpha (141 aa).

Positions 1-141 (VLSPADKTNV…VSTVLTSKYR (141 aa)) constitute a Globin domain. Serine 3 carries the phosphoserine modification. Position 7 is an N6-succinyllysine (lysine 7). Threonine 8 is subject to Phosphothreonine. Lysine 11 is subject to N6-succinyllysine. Lysine 16 is modified (N6-acetyllysine; alternate). The residue at position 16 (lysine 16) is an N6-succinyllysine; alternate. A Phosphotyrosine modification is found at tyrosine 24. Residue serine 35 is modified to Phosphoserine. Lysine 40 is subject to N6-succinyllysine. Serine 49 is modified (phosphoserine). O2 is bound at residue histidine 58. Histidine 87 serves as a coordination point for heme b. Serine 102 is modified (phosphoserine). Threonine 108 carries the phosphothreonine modification. Residues serine 124 and serine 131 each carry the phosphoserine modification. Phosphothreonine is present on residues threonine 134 and threonine 137. At serine 138 the chain carries Phosphoserine.

Belongs to the globin family. As to quaternary structure, heterotetramer of two alpha chains and two beta chains. Red blood cells.

Involved in oxygen transport from the lung to the various peripheral tissues. The chain is Hemoglobin subunit alpha from Otospermophilus beecheyi (California ground squirrel).